The following is a 400-amino-acid chain: CCA-adding enzyme (400 aa).

ATP is bound by residues glycine 32 and arginine 35. Glycine 32 and arginine 35 together coordinate CTP. Mg(2+)-binding residues include aspartate 45 and aspartate 47. ATP is bound by residues arginine 116, aspartate 159, arginine 162, arginine 165, and arginine 168. CTP is bound by residues arginine 116, aspartate 159, arginine 162, arginine 165, and arginine 168.

Belongs to the tRNA nucleotidyltransferase/poly(A) polymerase family. Bacterial CCA-adding enzyme type 3 subfamily. As to quaternary structure, homodimer. Requires Mg(2+) as cofactor.

The enzyme catalyses a tRNA precursor + 2 CTP + ATP = a tRNA with a 3' CCA end + 3 diphosphate. It carries out the reaction a tRNA with a 3' CCA end + 2 CTP + ATP = a tRNA with a 3' CCACCA end + 3 diphosphate. Its function is as follows. Catalyzes the addition and repair of the essential 3'-terminal CCA sequence in tRNAs without using a nucleic acid template. Adds these three nucleotides in the order of C, C, and A to the tRNA nucleotide-73, using CTP and ATP as substrates and producing inorganic pyrophosphate. tRNA 3'-terminal CCA addition is required both for tRNA processing and repair. Also involved in tRNA surveillance by mediating tandem CCA addition to generate a CCACCA at the 3' terminus of unstable tRNAs. While stable tRNAs receive only 3'-terminal CCA, unstable tRNAs are marked with CCACCA and rapidly degraded. This chain is CCA-adding enzyme, found in Limosilactobacillus fermentum (strain NBRC 3956 / LMG 18251) (Lactobacillus fermentum).